The following is a 150-amino-acid chain: Large ribosomal subunit protein bL9 (150 aa).

It belongs to the bacterial ribosomal protein bL9 family.

In terms of biological role, binds to the 23S rRNA. This chain is Large ribosomal subunit protein bL9, found in Burkholderia thailandensis (strain ATCC 700388 / DSM 13276 / CCUG 48851 / CIP 106301 / E264).